The sequence spans 291 residues: NAD kinase (291 aa).

Asp-73 (proton acceptor) is an active-site residue. NAD(+)-binding positions include 73–74 (DG), 147–148 (ND), Arg-175, Asp-177, and Gln-246.

This sequence belongs to the NAD kinase family. A divalent metal cation is required as a cofactor.

It is found in the cytoplasm. It catalyses the reaction NAD(+) + ATP = ADP + NADP(+) + H(+). In terms of biological role, involved in the regulation of the intracellular balance of NAD and NADP, and is a key enzyme in the biosynthesis of NADP. Catalyzes specifically the phosphorylation on 2'-hydroxyl of the adenosine moiety of NAD to yield NADP. This chain is NAD kinase, found in Chromobacterium violaceum (strain ATCC 12472 / DSM 30191 / JCM 1249 / CCUG 213 / NBRC 12614 / NCIMB 9131 / NCTC 9757 / MK).